Here is a 392-residue protein sequence, read N- to C-terminus: Small ribosomal subunit protein bS1 (392 aa).

S1 motif domains are found at residues 16 to 90 (GDKV…LSKR), 108 to 173 (DEII…LSRK), 194 to 262 (GDVI…LSIK), and 279 to 348 (DDVI…LSIK).

The protein belongs to the bacterial ribosomal protein bS1 family.

Binds mRNA; thus facilitating recognition of the initiation point. It is needed to translate mRNA with a short Shine-Dalgarno (SD) purine-rich sequence. This Staphylococcus haemolyticus (strain JCSC1435) protein is Small ribosomal subunit protein bS1 (rpsA).